A 295-amino-acid chain; its full sequence is Glutenin, low molecular weight subunit PTDUCD1 (295 aa).

The signal sequence occupies residues 1–20 (MKTFLVFALLAVVATSTIAQ). The interval 30-61 (ERPWQEQPLPPQHTLFPQQQPFPQQQQPPFSQ) is disordered. The span at 41 to 61 (QHTLFPQQQPFPQQQQPPFSQ) shows a compositional bias: low complexity.

Belongs to the gliadin/glutenin family. In terms of assembly, disulfide-bridge linked aggregates.

In terms of biological role, glutenins are high-molecular weight seed storage proteins of wheat endosperm. Thought to be responsible for the visco-elastic property of wheat dough. The sequence is that of Glutenin, low molecular weight subunit PTDUCD1 from Triticum aestivum (Wheat).